Here is a 109-residue protein sequence, read N- to C-terminus: SRA stem-loop-interacting RNA-binding protein, mitochondrial (109 aa).

S15 is subject to Phosphoserine. The 85-residue stretch at 19–103 (PVAFVRRIPW…RRPKLPQTSD (85 aa)) folds into the RRM domain. Phosphothreonine is present on T101. S102 bears the Phosphoserine mark.

Ubiquitously expressed, with highest level in heart, liver, skeletal muscle and testis.

The protein resides in the mitochondrion. The protein localises to the nucleus. Its function is as follows. RNA-binding protein that acts as a nuclear receptor corepressor. Probably acts by binding the SRA RNA, and repressing the SRA-mediated nuclear receptor coactivation. Binds the STR7 loop of SRA RNA. Also able to repress glucocorticoid (GR), androgen (AR), thyroid (TR) and VDR-mediated transactivation. This is SRA stem-loop-interacting RNA-binding protein, mitochondrial (SLIRP) from Homo sapiens (Human).